Here is a 233-residue protein sequence, read N- to C-terminus: MKRGFTLVEVLVAMAILVVVLAVGVRYFASTSELARNTQARSELQDRVRMVMQVVTADLQMAGARYWNSGNQNQAFSLPLPPLSGSNMGPKDTLTLYYVTSLRDLASACRRVDYGFEGDTLRRSDVNATPSSGSDCTTPPPNSQPLAEGMLALDIQYQCSDGSRKDTPDCGTDAYPRSAKVTVAGYSLTSVTNPGPASLTTVTGKTLACPQGRACYALTQEVLMPNLKPLPTP.

A propeptide spans 1–4 (MKRG) (leader sequence). Phe5 carries the post-translational modification N-methylphenylalanine. The helical transmembrane segment at 5 to 25 (FTLVEVLVAMAILVVVLAVGV) threads the bilayer. The segment at 121-143 (LRRSDVNATPSSGSDCTTPPPNS) is disordered. Positions 126–137 (VNATPSSGSDCT) are enriched in polar residues.

Its subcellular location is the cell inner membrane. It localises to the cell outer membrane. It is found in the periplasm. In terms of biological role, plays an essential role in natural DNA transformation but is not required for pilus biogenesis. This is Pilin-like protein PilA3 (pilA3) from Thermus thermophilus (strain ATCC BAA-163 / DSM 7039 / HB27).